A 351-amino-acid polypeptide reads, in one-letter code: MIENLVREEIKGFKNYEVHSIPYRYKMDANETPFELPEEVIKNIQEIVKSSQVNVYPDPTAEKLKEELARYCGVVPTNIFVGNGSDEIIHLIMLAFINKGDVVAYPHPSFAMYSVYSKIAGAVEIPVRLREDYNYDVDSFIKVIEKYQPKLVFLCNPNNPTGSVIEREDIIKIIQKSNGIVVVDEAYFEFYGNTIVDVINEFENLIVLRTLSKAFGLAGLRVGYAVANENILKYLNLVKSPYNINSLSQVIALKVLRTGVLKERVNFILKERERLIKELSKIPGIKVYPSKTNFILVKFKDADYVYQGLLERGILVRDFSKVEGLEGALRITVSSCEANDYLINGLKELLL.

Residue Lys-213 is modified to N6-(pyridoxal phosphate)lysine.

This sequence belongs to the class-II pyridoxal-phosphate-dependent aminotransferase family. Histidinol-phosphate aminotransferase subfamily. As to quaternary structure, homodimer. Requires pyridoxal 5'-phosphate as cofactor.

The catalysed reaction is L-histidinol phosphate + 2-oxoglutarate = 3-(imidazol-4-yl)-2-oxopropyl phosphate + L-glutamate. Its pathway is amino-acid biosynthesis; L-histidine biosynthesis; L-histidine from 5-phospho-alpha-D-ribose 1-diphosphate: step 7/9. The polypeptide is Histidinol-phosphate aminotransferase (Thermoanaerobacter pseudethanolicus (strain ATCC 33223 / 39E) (Clostridium thermohydrosulfuricum)).